Here is a 217-residue protein sequence, read N- to C-terminus: Octanoyltransferase (217 aa).

Residues 32-207 (NDSPDELWIV…TLSQLLGYQH (176 aa)) form the BPL/LPL catalytic domain. Substrate-binding positions include 71-78 (RGGQVTYH), 138-140 (SLG), and 151-153 (GLA). The active-site Acyl-thioester intermediate is the C169.

The protein belongs to the LipB family.

The protein localises to the cytoplasm. The enzyme catalyses octanoyl-[ACP] + L-lysyl-[protein] = N(6)-octanoyl-L-lysyl-[protein] + holo-[ACP] + H(+). Its pathway is protein modification; protein lipoylation via endogenous pathway; protein N(6)-(lipoyl)lysine from octanoyl-[acyl-carrier-protein]: step 1/2. In terms of biological role, catalyzes the transfer of endogenously produced octanoic acid from octanoyl-acyl-carrier-protein onto the lipoyl domains of lipoate-dependent enzymes. Lipoyl-ACP can also act as a substrate although octanoyl-ACP is likely to be the physiological substrate. The sequence is that of Octanoyltransferase from Shewanella oneidensis (strain ATCC 700550 / JCM 31522 / CIP 106686 / LMG 19005 / NCIMB 14063 / MR-1).